The following is a 430-amino-acid chain: Tyrosine--tRNA ligase (430 aa).

Y36 contributes to the L-tyrosine binding site. Positions 41–50 match the 'HIGH' region motif; the sequence is PTASSLHVGS. Positions 170 and 174 each coordinate L-tyrosine. A 'KMSKS' region motif is present at residues 230 to 234; that stretch reads KMGKT. K233 contributes to the ATP binding site. Residues 362-427 enclose the S4 RNA-binding domain; sequence VPAFELFDEI…GKKNYHRLVL (66 aa).

This sequence belongs to the class-I aminoacyl-tRNA synthetase family. TyrS type 1 subfamily. As to quaternary structure, homodimer.

The protein localises to the cytoplasm. It catalyses the reaction tRNA(Tyr) + L-tyrosine + ATP = L-tyrosyl-tRNA(Tyr) + AMP + diphosphate + H(+). Its function is as follows. Catalyzes the attachment of tyrosine to tRNA(Tyr) in a two-step reaction: tyrosine is first activated by ATP to form Tyr-AMP and then transferred to the acceptor end of tRNA(Tyr). This chain is Tyrosine--tRNA ligase, found in Desulfatibacillum aliphaticivorans.